We begin with the raw amino-acid sequence, 259 residues long: Probable iron export permease protein FetB (259 aa).

Residues 1–5 (MNSHN) lie on the Periplasmic side of the membrane. A helical membrane pass occupies residues 6–26 (ITNESLALALMLVVVAILISH). The Cytoplasmic segment spans residues 27–35 (KEKLALEKD). The next 2 helical transmembrane spans lie at 36-56 (ILWS…VLKY) and 57-77 (IFSV…CFNA). Topologically, residues 78–91 (AWNAQKRSKYIAKA) are cytoplasmic. The helical transmembrane segment at 92 to 112 (FISSFIAITVGAGITLAVLIL) threads the bilayer. Residues 113-117 (SGSIE) are Periplasmic-facing. The chain crosses the membrane as a helical span at residues 118 to 138 (FIPMQVIPIAGMIAGNAMVAV). Topologically, residues 139-191 (GLCYNNLGQRVISEQQQIQEKLSLGATPKQASAILIRDSIRAALIPTVDSAKT) are cytoplasmic. The chain crosses the membrane as a helical span at residues 192 to 212 (VGLVSLPGMMSGLIFAGIDPV). Residues 213 to 218 (KAIKYQ) lie on the Periplasmic side of the membrane. A helical transmembrane segment spans residues 219–239 (IMVTFMLLSTASLSTIIACYL). Topologically, residues 240–259 (TYRKFYNSRHQLVVTQLKKK) are cytoplasmic.

This sequence belongs to the UPF0014 family. As to quaternary structure, the complex is composed of two ATP-binding proteins (FetA) and two transmembrane proteins (FetB).

Its subcellular location is the cell inner membrane. In terms of biological role, part of the ABC transporter complex FetAB, which is probably involved in iron export and enhances resistance to H(2)O(2)-mediated oxidative stress. Probably responsible for the translocation of the substrate across the membrane. The sequence is that of Probable iron export permease protein FetB (fetB) from Escherichia coli (strain K12).